Reading from the N-terminus, the 96-residue chain is Small ribosomal subunit protein bS6 (96 aa).

It belongs to the bacterial ribosomal protein bS6 family.

Functionally, binds together with bS18 to 16S ribosomal RNA. The protein is Small ribosomal subunit protein bS6 of Streptococcus sanguinis (strain SK36).